The chain runs to 121 residues: MIKLRLKRFGKKKEASFRIVACNSTSRRDGRPLQELGFYNPRTKETRLDTEALRTRLTQGAQPTDVVRTLLEKGGLLEKTERPSIAIGKAKLEKEKLAKAKTKDEENDNSKVESEGNEAES.

Residues 97-114 (LAKAKTKDEENDNSKVES) show a composition bias toward basic and acidic residues. The interval 97 to 121 (LAKAKTKDEENDNSKVESEGNEAES) is disordered.

Belongs to the bacterial ribosomal protein bS16 family.

The polypeptide is Small ribosomal subunit protein bS16 (Prochlorococcus marinus (strain AS9601)).